A 738-amino-acid chain; its full sequence is Polyphosphate kinase (738 aa).

The disordered stretch occupies residues 1 to 48 (MIGNDRWVTEIETGPVTEARPDTNAREPGDRTPAAPPAATPAATTDQL). The segment covering 19 to 30 (ARPDTNAREPGD) has biased composition (basic and acidic residues). Residue Asn-91 coordinates ATP. Mg(2+) contacts are provided by Arg-427 and Arg-457. Residue His-487 is the Phosphohistidine intermediate of the active site. ATP-binding residues include Tyr-520, Arg-620, and His-648.

The protein belongs to the polyphosphate kinase 1 (PPK1) family. Mg(2+) serves as cofactor. Post-translationally, an intermediate of this reaction is the autophosphorylated ppk in which a phosphate is covalently linked to a histidine residue through a N-P bond.

It catalyses the reaction [phosphate](n) + ATP = [phosphate](n+1) + ADP. Its function is as follows. Catalyzes the reversible transfer of the terminal phosphate of ATP to form a long-chain polyphosphate (polyP). The protein is Polyphosphate kinase of Mycobacterium marinum (strain ATCC BAA-535 / M).